Reading from the N-terminus, the 399-residue chain is Elongation factor Tu (399 aa).

Residues 10-209 (KPHVNIGTIG…AVDDYIPTPA (200 aa)) form the tr-type G domain. The interval 19–26 (GHVDHGKT) is G1. Residue 19 to 26 (GHVDHGKT) participates in GTP binding. Residue threonine 26 participates in Mg(2+) binding. The tract at residues 60–64 (GITIA) is G2. Residues 81-84 (DCPG) are G3. GTP is bound by residues 81-85 (DCPGH) and 136-139 (NKAD). The G4 stretch occupies residues 136–139 (NKAD). Positions 174 to 176 (SAL) are G5.

The protein belongs to the TRAFAC class translation factor GTPase superfamily. Classic translation factor GTPase family. EF-Tu/EF-1A subfamily. Monomer.

Its subcellular location is the cytoplasm. The catalysed reaction is GTP + H2O = GDP + phosphate + H(+). Functionally, GTP hydrolase that promotes the GTP-dependent binding of aminoacyl-tRNA to the A-site of ribosomes during protein biosynthesis. The sequence is that of Elongation factor Tu from Campylobacter lari (strain RM2100 / D67 / ATCC BAA-1060).